The sequence spans 274 residues: AA9 family lytic polysaccharide monooxygenase A (274 aa).

The first 22 residues, 1–22 (MHVPQFISTGALLALLARPAAA), serve as a signal peptide directing secretion. His23 contributes to the Cu(2+) binding site. Cys63 and Cys194 are oxidised to a cystine. Gly67, Asp98, and Ser100 together coordinate (1,4-beta-D-glucosyl)n. His101 serves as a coordination point for Cu(2+). Position 174 (His174) interacts with O2. Residue Asp177 participates in (1,4-beta-D-glucosyl)n binding. Tyr191 contacts Cu(2+).

It belongs to the polysaccharide monooxygenase AA9 family. Cu(2+) is required as a cofactor.

The protein localises to the secreted. The catalysed reaction is [(1-&gt;4)-beta-D-glucosyl]n+m + reduced acceptor + O2 = 4-dehydro-beta-D-glucosyl-[(1-&gt;4)-beta-D-glucosyl]n-1 + [(1-&gt;4)-beta-D-glucosyl]m + acceptor + H2O.. Lytic polysaccharide monooxygenase (LPMO) that depolymerizes crystalline and amorphous polysaccharides via the oxidation of scissile alpha- or beta-(1-4)-glycosidic bonds, yielding C4 oxidation products. Catalysis by LPMOs requires the reduction of the active-site copper from Cu(II) to Cu(I) by a reducing agent and H(2)O(2) or O(2) as a cosubstrate. Cleaves a range of polysaccharides, including cellulose, xyloglucan, mixed-linkage glucan and glucomannan. The protein is AA9 family lytic polysaccharide monooxygenase A of Collariella virescens (Soil fungus).